We begin with the raw amino-acid sequence, 244 residues long: MKSLFEQFEIDLYCIIITRFFDISITTITVYLGLLMVIVIGMYKVSLYKATIIGGNNWQHIGEMIYEFVVDLIIEQVGKPGILFFPFIMSLFLFVLTLNVMGLIPLSFTVTGQLLVTFTLAITIMIGITIWGFRIHGIKFLNIFVPSGIEPWLLPLLVFIEIMSYVLRPISLAVRLFANMLAGHLLIHIIGVAAIYLMQFYFIGILPWICVIAFMFLELGIAFLQAYVFVLLTLIYIANIINLH.

The next 7 helical transmembrane spans lie at 20 to 40, 81 to 101, 113 to 133, 140 to 160, 176 to 196, 202 to 222, and 223 to 243; these read FFDISITTITVYLGLLMVIVI, GILFFPFIMSLFLFVLTLNVM, QLLVTFTLAITIMIGITIWGF, FLNIFVPSGIEPWLLPLLVFI, LFANMLAGHLLIHIIGVAAIY, FIGILPWICVIAFMFLELGIA, and FLQAYVFVLLTLIYIANIINL.

The protein belongs to the ATPase A chain family. As to quaternary structure, F-type ATPases have 2 components, CF(1) - the catalytic core - and CF(0) - the membrane proton channel. CF(1) has five subunits: alpha(3), beta(3), gamma(1), delta(1), epsilon(1). CF(0) has three main subunits: a, b and c.

The protein resides in the mitochondrion inner membrane. Mitochondrial membrane ATP synthase (F(1)F(0) ATP synthase or Complex V) produces ATP from ADP in the presence of a proton gradient across the membrane which is generated by electron transport complexes of the respiratory chain. F-type ATPases consist of two structural domains, F(1) - containing the extramembraneous catalytic core and F(0) - containing the membrane proton channel, linked together by a central stalk and a peripheral stalk. During catalysis, ATP synthesis in the catalytic domain of F(1) is coupled via a rotary mechanism of the central stalk subunits to proton translocation. Key component of the proton channel; it may play a direct role in the translocation of protons across the membrane. The sequence is that of ATP synthase subunit a (atp6) from Dictyostelium discoideum (Social amoeba).